The following is a 203-amino-acid chain: Urease accessory protein UreG (203 aa).

14 to 21 (GPVGSGKT) is a GTP binding site.

Belongs to the SIMIBI class G3E GTPase family. UreG subfamily. As to quaternary structure, homodimer. UreD, UreF and UreG form a complex that acts as a GTP-hydrolysis-dependent molecular chaperone, activating the urease apoprotein by helping to assemble the nickel containing metallocenter of UreC. The UreE protein probably delivers the nickel.

The protein resides in the cytoplasm. Facilitates the functional incorporation of the urease nickel metallocenter. This process requires GTP hydrolysis, probably effectuated by UreG. This Rhizobium meliloti (strain 1021) (Ensifer meliloti) protein is Urease accessory protein UreG.